Consider the following 381-residue polypeptide: ADP,ATP carrier protein 1, mitochondrial (381 aa).

The N-terminal 70 residues, 1 to 70 (MVDQVQHPTI…ATTASPVFVQ (70 aa)), are a transit peptide targeting the mitochondrion. Solcar repeat units lie at residues 78 to 171 (TNFA…FKRL), 183 to 276 (KWFA…VKPV), and 284 to 370 (DSFF…LQLI). The next 5 helical transmembrane spans lie at 80–107 (FALDFLMGGVSAAVSKTAAAPIERVKLL), 148–172 (TANVIRYFPTQALNFAFKDYFKRLF), 181–201 (YWKWFAGNLASGGAAGASSLL), 252–273 (FNISCVGIIVYRGLYFGLYDSV), and 287–307 (FASFALGWVITNGAGLASYPI). Arg-153 and Lys-165 together coordinate ADP. Residue Arg-311 participates in ADP binding. An important for transport activity region spans residues 311–316 (RRRMMM). The short motif at 311–316 (RRRMMM) is the Nucleotide carrier signature motif element. The chain crosses the membrane as a helical span at residues 347-367 (AGANILRAVAGAGVLSGYDKL).

It belongs to the mitochondrial carrier (TC 2.A.29) family. As to quaternary structure, monomer.

It is found in the mitochondrion inner membrane. The catalysed reaction is ADP(in) + ATP(out) = ADP(out) + ATP(in). The matrix-open state (m-state) is inhibited by the membrane-permeable bongkrekic acid (BKA). The cytoplasmic-open state (c-state) is inhibited by the membrane-impermeable toxic inhibitor carboxyatractyloside (CATR). Its function is as follows. ADP:ATP antiporter that mediates import of ADP into the mitochondrial matrix for ATP synthesis, and export of ATP out to fuel the cell. Cycles between the cytoplasmic-open state (c-state) and the matrix-open state (m-state): operates by the alternating access mechanism with a single substrate-binding site intermittently exposed to either the cytosolic (c-state) or matrix (m-state) side of the inner mitochondrial membrane. This is ADP,ATP carrier protein 1, mitochondrial (AAC1) from Arabidopsis thaliana (Mouse-ear cress).